Consider the following 673-residue polypeptide: UvrABC system protein B (673 aa).

In terms of domain architecture, Helicase ATP-binding spans glutamate 26–arginine 183. Position 39–46 (glycine 39–threonine 46) interacts with ATP. The Beta-hairpin motif lies at tyrosine 92–valine 115. The Helicase C-terminal domain maps to glutamine 431–leucine 597. Residues alanine 608–methionine 627 form a disordered region. A UVR domain is found at glutamine 633–leucine 668.

Belongs to the UvrB family. As to quaternary structure, forms a heterotetramer with UvrA during the search for lesions. Interacts with UvrC in an incision complex.

It is found in the cytoplasm. In terms of biological role, the UvrABC repair system catalyzes the recognition and processing of DNA lesions. A damage recognition complex composed of 2 UvrA and 2 UvrB subunits scans DNA for abnormalities. Upon binding of the UvrA(2)B(2) complex to a putative damaged site, the DNA wraps around one UvrB monomer. DNA wrap is dependent on ATP binding by UvrB and probably causes local melting of the DNA helix, facilitating insertion of UvrB beta-hairpin between the DNA strands. Then UvrB probes one DNA strand for the presence of a lesion. If a lesion is found the UvrA subunits dissociate and the UvrB-DNA preincision complex is formed. This complex is subsequently bound by UvrC and the second UvrB is released. If no lesion is found, the DNA wraps around the other UvrB subunit that will check the other stand for damage. The sequence is that of UvrABC system protein B from Escherichia coli O81 (strain ED1a).